The primary structure comprises 343 residues: Probable transcription factor MYB58 (343 aa).

The interval 1 to 30 (MARAPGGVRRRSGRRGAGGGGAGGGGEALR) is disordered. Residues 15 to 27 (RGAGGGGAGGGGE) are compositionally biased toward gly residues. 2 HTH myb-type domains span residues 26–78 (GEAL…VNKL) and 79–134 (RPNL…KRLA). 2 DNA-binding regions (H-T-H motif) span residues 54–77 (WSSIRSKGLLPRTGKSCRLRWVNK) and 107–130 (WARIATYLQGRTDNDVKNFWSTRQ). Disordered stretches follow at residues 137-169 (LRGPLPAARPNKHNSGKGKAPSSSSLDSQTATF), 219-238 (PPADGEASSSNAAQSAPPPL), and 307-343 (DDLPPNMFDDAVDQPPPPPPPPPPPSPSPSPSRDDVL). Residues 157-169 (PSSSSLDSQTATF) are compositionally biased toward polar residues. Residues 320–336 (QPPPPPPPPPPPSPSPS) are compositionally biased toward pro residues.

Its subcellular location is the nucleus. Functionally, probable transcription factor. The chain is Probable transcription factor MYB58 from Oryza sativa subsp. japonica (Rice).